Reading from the N-terminus, the 603-residue chain is Probable potassium transport system protein Kup (603 aa).

Helical transmembrane passes span 15–35 (GLVFGDIGTSPIYTLTVIFLL), 43–63 (IIGVLSLIIWTLIILVTVEYA), 94–114 (VAFVTLLAYIGTSFLMGDGVI), 135–155 (NIGQSTIILISAAIAIALFSV), 163–183 (ITWVFGPIMVLWFATIGFSGI), 209–229 (GIIGFFVLSEVILCATGGEAL), 244–264 (AWRFVFLALVLNYLGQGAFLI), 283–303 (ILYIPFLLLSVVATIIASQAM), 336–356 (IYISTVNWLLLVSVLFMMLIF), 365–385 (AYGLAVTGTMSITGIMMTSIF), 390–410 (NITKALISLFITFIDVVFLLS), and 415–435 (IPHGGYWSVIIALFILSLILI).

The protein belongs to the HAK/KUP transporter (TC 2.A.72) family.

The protein localises to the cell membrane. It catalyses the reaction K(+)(in) + H(+)(in) = K(+)(out) + H(+)(out). Transport of potassium into the cell. Likely operates as a K(+):H(+) symporter. In Methanosarcina barkeri (strain Fusaro / DSM 804), this protein is Probable potassium transport system protein Kup.